The chain runs to 235 residues: Phosphoribosylformylglycinamidine synthase subunit PurQ (235 aa).

A Glutamine amidotransferase type-1 domain is found at 5–235 (FGVVVFPGSN…LLNHVSIVAA (231 aa)). Cys88 (nucleophile) is an active-site residue. Catalysis depends on residues His205 and Glu207.

As to quaternary structure, part of the FGAM synthase complex composed of 1 PurL, 1 PurQ and 2 PurS subunits.

The protein localises to the cytoplasm. The catalysed reaction is N(2)-formyl-N(1)-(5-phospho-beta-D-ribosyl)glycinamide + L-glutamine + ATP + H2O = 2-formamido-N(1)-(5-O-phospho-beta-D-ribosyl)acetamidine + L-glutamate + ADP + phosphate + H(+). It catalyses the reaction L-glutamine + H2O = L-glutamate + NH4(+). It participates in purine metabolism; IMP biosynthesis via de novo pathway; 5-amino-1-(5-phospho-D-ribosyl)imidazole from N(2)-formyl-N(1)-(5-phospho-D-ribosyl)glycinamide: step 1/2. Part of the phosphoribosylformylglycinamidine synthase complex involved in the purines biosynthetic pathway. Catalyzes the ATP-dependent conversion of formylglycinamide ribonucleotide (FGAR) and glutamine to yield formylglycinamidine ribonucleotide (FGAM) and glutamate. The FGAM synthase complex is composed of three subunits. PurQ produces an ammonia molecule by converting glutamine to glutamate. PurL transfers the ammonia molecule to FGAR to form FGAM in an ATP-dependent manner. PurS interacts with PurQ and PurL and is thought to assist in the transfer of the ammonia molecule from PurQ to PurL. The protein is Phosphoribosylformylglycinamidine synthase subunit PurQ of Salinibacter ruber (strain DSM 13855 / M31).